The primary structure comprises 168 residues: DOMON domain-containing protein Y73F4A.2 (168 aa).

Residues 1–18 form the signal peptide; sequence MFRSIAVLSALLFAFASA. The DOMON domain maps to 26-143; that stretch reads SDFEVYWRFA…CQKWRFVKSG (118 aa). Asn36 carries N-linked (GlcNAc...) asparagine glycosylation. Residues 148–168 are disordered; sequence GQLTRNDKSPKEKKVCPMECN. Basic and acidic residues predominate over residues 152 to 168; that stretch reads RNDKSPKEKKVCPMECN.

The protein localises to the secreted. In Caenorhabditis elegans, this protein is DOMON domain-containing protein Y73F4A.2.